A 303-amino-acid chain; its full sequence is 2-phospho-L-lactate transferase (303 aa).

2 residues coordinate 7,8-didemethyl-8-hydroxy-5-deazariboflavin: Asp48 and Lys87.

This sequence belongs to the CofD family. As to quaternary structure, homodimer. The cofactor is Mg(2+).

The catalysed reaction is (2S)-lactyl-2-diphospho-5'-guanosine + 7,8-didemethyl-8-hydroxy-5-deazariboflavin = oxidized coenzyme F420-0 + GMP + H(+). It participates in cofactor biosynthesis; coenzyme F420 biosynthesis. Functionally, catalyzes the transfer of the 2-phospholactate moiety from (2S)-lactyl-2-diphospho-5'-guanosine to 7,8-didemethyl-8-hydroxy-5-deazariboflavin (FO) with the formation of oxidized coenzyme F420-0 and GMP. This is 2-phospho-L-lactate transferase from Methanosarcina mazei (strain ATCC BAA-159 / DSM 3647 / Goe1 / Go1 / JCM 11833 / OCM 88) (Methanosarcina frisia).